The following is a 295-amino-acid chain: Glutamyl-Q tRNA(Asp) synthetase (295 aa).

L-glutamate is bound by residues 9 to 13 (RFAPT) and Glu45. A 'HIGH' region motif is present at residues 12–22 (PTPSGFLHFGS). Zn(2+) contacts are provided by Cys101, Cys103, Tyr115, and Cys119. Residues Tyr172 and Arg190 each contribute to the L-glutamate site. Positions 228-232 (KLGKS) match the 'KMSKS' region motif. An ATP-binding site is contributed by Lys231.

Belongs to the class-I aminoacyl-tRNA synthetase family. GluQ subfamily. Zn(2+) serves as cofactor.

Its function is as follows. Catalyzes the tRNA-independent activation of glutamate in presence of ATP and the subsequent transfer of glutamate onto a tRNA(Asp). Glutamate is transferred on the 2-amino-5-(4,5-dihydroxy-2-cyclopenten-1-yl) moiety of the queuosine in the wobble position of the QUC anticodon. In Pseudomonas entomophila (strain L48), this protein is Glutamyl-Q tRNA(Asp) synthetase.